The sequence spans 666 residues: Putative cysteine-rich receptor-like protein kinase 20 (666 aa).

An N-terminal signal peptide occupies residues 1–23 (MSSLICFIFLFLFSFITSFTASA). Residues 24-264 (QNPFYLYHNC…PRPGKGGNSS (241 aa)) are Extracellular-facing. Gnk2-homologous domains are found at residues 27–131 (FYLY…NRNI) and 137–241 (TDGG…NYEF). Residues Asn-32, Asn-42, Asn-60, Asn-69, and Asn-103 are each glycosylated (N-linked (GlcNAc...) asparagine). A glycan (N-linked (GlcNAc...) asparagine) is linked at Asn-262. The helical transmembrane segment at 265–285 (VIVIAVVVPITVLFLLFVAFF) threads the bilayer. Residues 286-666 (SVRRAKRKKT…EASITSVAPR (381 aa)) lie on the Cytoplasmic side of the membrane. Positions 344–623 (FLPINKLGQG…QMLTTSSIAL (280 aa)) constitute a Protein kinase domain. ATP is bound by residues 350–358 (LGQGGFGEV) and Lys-372. Tyr-417 is subject to Phosphotyrosine. The active-site Proton acceptor is the Asp-469. Phosphothreonine is present on Thr-509. The residue at position 517 (Tyr-517) is a Phosphotyrosine.

The protein belongs to the protein kinase superfamily. Ser/Thr protein kinase family. CRK subfamily.

It localises to the membrane. It catalyses the reaction L-seryl-[protein] + ATP = O-phospho-L-seryl-[protein] + ADP + H(+). It carries out the reaction L-threonyl-[protein] + ATP = O-phospho-L-threonyl-[protein] + ADP + H(+). The polypeptide is Putative cysteine-rich receptor-like protein kinase 20 (CRK20) (Arabidopsis thaliana (Mouse-ear cress)).